The primary structure comprises 1833 residues: Protein TIC 214 (1833 aa).

The next 6 helical transmembrane spans lie at 18 to 38 (IINS…FSIG), 67 to 87 (FIMG…HLAL), 90 to 110 (PHTI…WNNH), 127 to 147 (LSIQ…YFIL), 175 to 195 (VGWL…LVWI), and 218 to 238 (IFSI…PSPI). The disordered stretch occupies residues 254–301 (EETNLEIEKTSETKETKQEEEGFTEEDPSPSLFSEEKEDPDKIDETEK). Basic and acidic residues-rich tracts occupy residues 259–273 (EIEK…KQEE) and 292–301 (DPDKIDETEK).

The protein belongs to the TIC214 family. In terms of assembly, part of the Tic complex.

The protein resides in the plastid. Its subcellular location is the chloroplast inner membrane. Functionally, involved in protein precursor import into chloroplasts. May be part of an intermediate translocation complex acting as a protein-conducting channel at the inner envelope. This is Protein TIC 214 from Spinacia oleracea (Spinach).